The primary structure comprises 194 residues: Lymphocyte antigen 6 complex locus protein G5b (194 aa).

The first 18 residues, 1–18, serve as a signal peptide directing secretion; sequence MRACVLVHVLTMVGFALG. The 93-residue stretch at 26–118 folds into the UPAR/Ly6 domain; sequence RTCHLCFLED…SAQHQSTLPG (93 aa). 5 disulfide bridges follow: C28–C55, C31–C40, C47–C73, C81–C98, and C99–C104. The N-linked (GlcNAc...) asparagine glycan is linked to N182.

Post-translationally, N-glycosylated.

The protein localises to the secreted. The polypeptide is Lymphocyte antigen 6 complex locus protein G5b (Ly6g5b) (Rattus norvegicus (Rat)).